Reading from the N-terminus, the 161-residue chain is Nucleotide-binding protein AZOSEA28950 (161 aa).

Belongs to the YajQ family.

Its function is as follows. Nucleotide-binding protein. This is Nucleotide-binding protein AZOSEA28950 from Aromatoleum aromaticum (strain DSM 19018 / LMG 30748 / EbN1) (Azoarcus sp. (strain EbN1)).